The following is a 294-amino-acid chain: S-adenosylmethionine uptake transporter (294 aa).

The next 10 helical transmembrane spans lie at 8-28, 41-61, 74-91, 98-118, 121-141, 148-168, 177-197, 207-227, 237-257, and 260-280; these read YLTG…NDVI, VAFF…VYYG, ILRG…TYGL, TATV…VFFL, NIIW…VVTL, FNPE…LDII, SMIS…LPVA, FELA…FFLL, ATAP…YFIF, and FPDK…LFII. 2 consecutive EamA domains span residues 21–141 and 160–280; these read SSSA…VVTL and ISFA…LFII.

The protein belongs to the drug/metabolite transporter (DMT) superfamily. 10 TMS drug/metabolite exporter (DME) (TC 2.A.7.3) family.

It is found in the cell inner membrane. Its function is as follows. Transports S-adenosylmethionine. This is S-adenosylmethionine uptake transporter (sam) from Rickettsia conorii (strain ATCC VR-613 / Malish 7).